Reading from the N-terminus, the 204-residue chain is Terpene cyclase ausL (204 aa).

5 helical membrane-spanning segments follow: residues leucine 19 to valine 39, alanine 49 to tyrosine 69, histidine 75 to leucine 95, leucine 114 to leucine 134, and glycine 138 to valine 158.

The protein belongs to the paxB family.

The protein resides in the membrane. It participates in secondary metabolite biosynthesis; terpenoid biosynthesis. Functionally, terpene cyclase; part of the gene cluster B that mediates the biosynthesis of austinol and dehydroaustinol, two fungal meroterpenoids. The first step of the pathway is the synthesis of 3,5-dimethylorsellinic acid by the polyketide synthase ausA. 3,5-dimethylorsellinic acid is then prenylated by the polyprenyl transferase ausN. Further epoxidation by the FAD-dependent monooxygenase ausM and cyclization by the probable terpene cyclase ausL lead to the formation of protoaustinoid A. Protoaustinoid A is then oxidized to spiro-lactone preaustinoid A3 by the combined action of the FAD-binding monooxygenases ausB and ausC, and the dioxygenase ausE. Acid-catalyzed keto-rearrangement and ring contraction of the tetraketide portion of preaustinoid A3 by ausJ lead to the formation of preaustinoid A4. The aldo-keto reductase ausK, with the help of ausH, is involved in the next step by transforming preaustinoid A4 into isoaustinone which is in turn hydroxylated by the P450 monooxygenase ausI to form austinolide. Finally, the cytochrome P450 monooxygenase ausG modifies austinolide to austinol. Austinol can be further modified to dehydroaustinol which forms a diffusible complex with diorcinol that initiates conidiation. Due to genetic rearrangements of the clusters and the subsequent loss of some enzymes, the end products of the Emericella nidulans austinoid biosynthesis clusters are austinol and dehydroaustinol, even if additional enzymes, such as the O-acetyltransferase ausQ and the cytochrome P450 monooxygenase ausR are still functional. The chain is Terpene cyclase ausL from Emericella nidulans (strain FGSC A4 / ATCC 38163 / CBS 112.46 / NRRL 194 / M139) (Aspergillus nidulans).